The chain runs to 546 residues: Cyclic GMP-AMP synthase-like receptor (546 aa).

The span at 1 to 10 (MPVGSRQNRV) shows a compositional bias: polar residues. Disordered stretches follow at residues 1–116 (MPVG…CASR) and 134–186 (AKQE…RLTN). Positions 35–45 (YTERKERKDVQ) are enriched in basic and acidic residues. Positions 69–80 (TSRTLRQTSQSR) are enriched in low complexity. Basic and acidic residues-rich tracts occupy residues 82–95 (EVLE…DCKK) and 145–174 (KEGY…DKAT). Polar residues predominate over residues 175-186 (SHSTKGSFRLTN). ATP-binding positions include Ser243 and 255 to 257 (EFD). 3 residues coordinate Mg(2+): Glu255, Asp257, and Asp374. GTP contacts are provided by residues Asp374 and 428 to 435 (RTSFSLAE). ATP contacts are provided by residues 432-435 (SLAE), Lys455, and 470-474 (SYHLK).

The protein belongs to the mab-21 family. The cofactor is Mg(2+). Mn(2+) serves as cofactor.

It carries out the reaction GTP + ATP = 2',3'-cGAMP + 2 diphosphate. The catalysed reaction is GTP + ATP = pppGp(2'-5')A + diphosphate. The enzyme catalyses pppGp(2'-5')A = 2',3'-cGAMP + diphosphate. Functionally, nucleotidyltransferase that catalyzes the formation of cyclic GMP-AMP (2',3'-cGAMP) from ATP and GTP and plays a key role in innate immunity. Directly binds some unknown ligand, activating the nucleotidyltransferase activity, leading to synthesis of 2',3'-cGAMP, a second messenger that binds to and activates Sting, thereby triggering the immune response via activation of the NF-kappa-B transcription factor. The chain is Cyclic GMP-AMP synthase-like receptor from Exaiptasia diaphana (Tropical sea anemone).